Here is a 1587-residue protein sequence, read N- to C-terminus: Mediator of RNA polymerase II transcription subunit 23 (1587 aa).

Disordered regions lie at residues 1374-1484 and 1567-1587; these read SQSE…QLQH and QHQQ…QQPH. Over residues 1385–1404 the composition is skewed to basic and acidic residues; the sequence is PPEKEKSPEKEKEQEQEQHV. An acidic region spans residues 1387–1404; that stretch reads EKEKSPEKEKEQEQEQHV. The span at 1410-1426 shows a compositional bias: polar residues; the sequence is LESTPSVSSLPQMQHHL. Positions 1430–1450 are enriched in low complexity; that stretch reads PLLPSHQMMPPPQQHSSSLQH. Over residues 1463–1484 the composition is skewed to polar residues; that stretch reads DTSQHQTIQQQSNHPTQQQLQH. The span at 1567 to 1576 shows a compositional bias: low complexity; it reads QHQQYMQQQQ. The segment covering 1577-1587 has biased composition (basic residues); that stretch reads QHHHQHQQQPH.

It belongs to the Mediator complex subunit 23 family. In terms of assembly, component of the Mediator complex. Interacts with let-19/mdt-13.

Its subcellular location is the nucleus. Its function is as follows. Component of the Mediator complex, a coactivator involved in regulated gene transcription of nearly all RNA polymerase II-dependent genes. Mediator functions as a bridge to convey information from gene-specific regulatory proteins to the basal RNA polymerase II transcription machinery. Mediator is recruited to promoters by direct interactions with regulatory proteins and serves as a scaffold for the assembly of a functional pre-initiation complex with RNA polymerase II and the general transcription factors. Functions downstream of receptor let-23 and let-60/Ras during vulval induction likely by down-regulating the expression of phosphatase dep-1 and lin-12/Notch in vulva precursor cell descendants with a primary cell fate. Acts to repress beta-catenin target genes. Required for asymmetric division of T-cells. Plays a role in responses to M.nematophilum-mediated bacterial infection by promoting tail swelling and preventing constipation. The protein is Mediator of RNA polymerase II transcription subunit 23 (sur-2) of Caenorhabditis elegans.